Reading from the N-terminus, the 324-residue chain is MDTLTRFLPEHLQQNQLPEALGGVLLSVVSACTEINAKVRLGALAGVLGMAGTGNIQGEDQKKLDVIANNIMIDTLKANPAVAGLASEEEDTFVSAGENGRYLVLFDPLDGSSNIDVNISVGTIFSILAKPEGALATESFLQTGRQQLAAGYVLYGPQTQLVFTFGHGVYVFTLNAENEFVLTKENPKVPESTKEFAINMSNRRHWLPPVQQYVDELLAGETGTRGKNYNMRWVASMVAEIHRILMRGGVFMYLQDKRDPSKPGKLRLMYEANPMALILEQAGASASNAYQAMLDIQPESLHQRVAVIMGSSEEVDYLNRLHSK.

Residues glutamate 88, aspartate 107, leucine 109, and aspartate 110 each coordinate Mg(2+). Substrate contacts are provided by residues 110–113, asparagine 199, and lysine 265; that span reads DGSS. Glutamate 271 is a Mg(2+) binding site.

The protein belongs to the FBPase class 1 family. As to quaternary structure, homotetramer. It depends on Mg(2+) as a cofactor.

The protein localises to the cytoplasm. The catalysed reaction is beta-D-fructose 1,6-bisphosphate + H2O = beta-D-fructose 6-phosphate + phosphate. Its pathway is carbohydrate biosynthesis; gluconeogenesis. The chain is Fructose-1,6-bisphosphatase class 1 from Neisseria gonorrhoeae (strain ATCC 700825 / FA 1090).